The sequence spans 244 residues: Protein crossbronx (244 aa).

The UBC core domain occupies 20–176 (QQEYKILAEY…VQENIKESKE (157 aa)). A disordered region spans residues 209 to 244 (AGRSKQTEPSAQQGNGGHATGLSWVKEGEFKPLSIE).

The protein belongs to the ubiquitin-conjugating enzyme family. FTS subfamily.

This Drosophila sechellia (Fruit fly) protein is Protein crossbronx (cbx).